Consider the following 202-residue polypeptide: Matrix protein (202 aa).

The short motif at 35–38 is the PPXY motif element; that stretch reads PPEY. Residues 115 to 151 are essential for glycoprotein binding; the sequence is KLRRTLIFQWADSRGPLEGEELEYSQEITWDDDTEFV.

The protein belongs to the lyssavirus matrix protein family. In terms of assembly, homomultimer. Interacts with nucleoprotein and with the cytoplasmic domain of glycoprotein. Interacts with host ATP6V1A; this interaction plays an important role in virion uncoating after viral entry.

Its subcellular location is the virion membrane. The protein resides in the host endomembrane system. It localises to the host cytoplasm. In terms of biological role, plays a major role in assembly, budding and uncoating of virion after membrane fusion. Completely covers the ribonucleoprotein coil and keep it in condensed bullet-shaped form. Inhibits viral transcription and stimulates replication. Plays a major role in early induction of TRAIL-mediated apoptosis in infected neurons. Inhibits the integrated stress response (ISR) in the infected cell by blocking the formation of stress granules. In Rabies virus (strain CVS-11) (RABV), this protein is Matrix protein (M).